The sequence spans 83 residues: Cytochrome b559 subunit alpha (83 aa).

Residues 21–35 form a helical membrane-spanning segment; it reads VIHSITIPSLFIAGW. Position 23 (His-23) interacts with heme.

It belongs to the PsbE/PsbF family. In terms of assembly, heterodimer of an alpha subunit and a beta subunit. PSII is composed of 1 copy each of membrane proteins PsbA, PsbB, PsbC, PsbD, PsbE, PsbF, PsbH, PsbI, PsbJ, PsbK, PsbL, PsbM, PsbT, PsbX, PsbY, PsbZ, Psb30/Ycf12, at least 3 peripheral proteins of the oxygen-evolving complex and a large number of cofactors. It forms dimeric complexes. Heme b serves as cofactor.

The protein localises to the plastid. It localises to the chloroplast thylakoid membrane. Its function is as follows. This b-type cytochrome is tightly associated with the reaction center of photosystem II (PSII). PSII is a light-driven water:plastoquinone oxidoreductase that uses light energy to abstract electrons from H(2)O, generating O(2) and a proton gradient subsequently used for ATP formation. It consists of a core antenna complex that captures photons, and an electron transfer chain that converts photonic excitation into a charge separation. The protein is Cytochrome b559 subunit alpha of Ginkgo biloba (Ginkgo).